The following is a 642-amino-acid chain: Threonine--tRNA ligase (642 aa).

Positions Asp239–Pro530 are catalytic. Zn(2+) is bound by residues Cys331, His382, and His507.

This sequence belongs to the class-II aminoacyl-tRNA synthetase family. In terms of assembly, homodimer. Requires Zn(2+) as cofactor.

It localises to the cytoplasm. It catalyses the reaction tRNA(Thr) + L-threonine + ATP = L-threonyl-tRNA(Thr) + AMP + diphosphate + H(+). Functionally, catalyzes the attachment of threonine to tRNA(Thr) in a two-step reaction: L-threonine is first activated by ATP to form Thr-AMP and then transferred to the acceptor end of tRNA(Thr). Also edits incorrectly charged L-seryl-tRNA(Thr). This Lawsonia intracellularis (strain PHE/MN1-00) protein is Threonine--tRNA ligase.